Reading from the N-terminus, the 208-residue chain is uncharacterized protein (208 aa).

Disordered regions lie at residues 91–115 (PGQAGSQEAADGKGRLPDITSPSQD), 127–156 (QSWSSGTSRPTCLAYRPRHLSPSSKPKRPG), and 182–208 (NKLGSSDDSDTDRFSSVTSGSSRRKFK). The span at 127 to 136 (QSWSSGTSRP) shows a compositional bias: polar residues.

This is an uncharacterized protein from Rattus norvegicus (Rat).